The sequence spans 316 residues: Cyclin-dependent kinase inhibitor 1C (316 aa).

At arginine 107 the chain carries Omega-N-methylarginine. Residues glutamate 124 to valine 153 are disordered. Over residues valine 139–valine 153 the composition is skewed to pro residues. A run of 9 repeats spans residues proline 156 to alanine 159, proline 160 to alanine 163, proline 180 to alanine 183, proline 184 to alanine 187, proline 188 to alanine 191, proline 198 to alanine 201, proline 202 to alanine 205, proline 206 to alanine 209, and proline 210 to alanine 213. The interval proline 156 to alanine 213 is 9 X 4 AA repeats of P-A-P-A. A compositionally biased stretch (pro residues) spans alanine 181–aspartate 217. Residues alanine 181 to asparagine 260 are disordered. The segment covering serine 223–arginine 233 has biased composition (polar residues). Low complexity predominate over residues alanine 251–asparagine 260. Serine 268 carries the post-translational modification Phosphoserine. The Nuclear localization signal motif lies at lysine 278–arginine 281. The tract at residues lysine 278–arginine 316 is disordered.

The protein belongs to the CDI family. Interacts with PCNA. In terms of tissue distribution, expressed in the heart, brain, lung, skeletal muscle, kidney, pancreas and testis. Expressed in the eye. High levels are seen in the placenta while low levels are seen in the liver.

It is found in the nucleus. Functionally, potent tight-binding inhibitor of several G1 cyclin/CDK complexes (cyclin E-CDK2, cyclin D2-CDK4, and cyclin A-CDK2) and, to lesser extent, of the mitotic cyclin B-CDC2. Negative regulator of cell proliferation. May play a role in maintenance of the non-proliferative state throughout life. This Homo sapiens (Human) protein is Cyclin-dependent kinase inhibitor 1C (CDKN1C).